A 373-amino-acid chain; its full sequence is uncharacterized protein (373 aa).

In terms of domain architecture, CP-type G spans 14–168 (KKIVNKIIDE…LMDTPGVLEM (155 aa)). 117 to 124 (GYPNVGKS) contacts GTP.

Belongs to the TRAFAC class YlqF/YawG GTPase family.

This is an uncharacterized protein from Methanocaldococcus jannaschii (strain ATCC 43067 / DSM 2661 / JAL-1 / JCM 10045 / NBRC 100440) (Methanococcus jannaschii).